We begin with the raw amino-acid sequence, 170 residues long: NADH-dependent flavin reductase StyB (170 aa).

It belongs to the non-flavoprotein flavin reductase family. In terms of assembly, homodimer.

It catalyses the reaction a reduced flavin + NAD(+) = an oxidized flavin + NADH + 2 H(+). Its pathway is aromatic compound metabolism. Its function is as follows. Reductase component of a two-component system that catalyzes the first step in the aerobic styrene degradation pathway by enantioselective epoxidation of the vinyl side chain. Utilizes NADH to reduce FAD, which is then transferred to the styrene monooxygenase StyA. The protein is NADH-dependent flavin reductase StyB (styB) of Pseudomonas fluorescens.